A 964-amino-acid polypeptide reads, in one-letter code: Syndetin (964 aa).

Met-1 carries the post-translational modification N-acetylmethionine. The tract at residues 1-25 is disordered; it reads MQKIKSLMTRQGLKSPPESLNDLGA. Ser-15 carries the post-translational modification Phosphoserine. Coiled-coil stretches lie at residues 81–107 and 216–244; these read LNLQ…VADL and YSCI…LSKI. Phosphoserine occurs at positions 494, 498, 559, and 561. Residues 532–563 form a disordered region; sequence DEETEDVLASNGYESDEQEKSAYQDYDSDSDV. Residue Lys-963 forms a Glycyl lysine isopeptide (Lys-Gly) (interchain with G-Cter in SUMO1); alternate linkage. Lys-963 participates in a covalent cross-link: Glycyl lysine isopeptide (Lys-Gly) (interchain with G-Cter in SUMO2); alternate.

It belongs to the syndetin family. Component of the endosome-associated retrograde protein (EARP) complex, composed of VPS51, VPS52, VPS53 and VPS50/Syndetin. The EARP complex interacts with EIPR1. Interacts with VPS51 and VPS53 in an EIPR1-independent manner.

It is found in the recycling endosome. The protein resides in the membrane. In terms of biological role, acts as a component of the EARP complex that is involved in endocytic recycling. The EARP complex associates with Rab4-positive endosomes and promotes recycling of internalized transferrin receptor (TFRC) to the plasma membrane. Within the EARP complex, required to tether the complex to recycling endosomes. Not involved in retrograde transport from early and late endosomes to the trans-Golgi network (TGN). The protein is Syndetin of Mus musculus (Mouse).